A 171-amino-acid polypeptide reads, in one-letter code: Co-chaperone protein HscB (171 aa).

The region spanning Asp2 to Leu74 is the J domain.

This sequence belongs to the HscB family. Interacts with HscA and stimulates its ATPase activity. Interacts with IscU.

Functionally, co-chaperone involved in the maturation of iron-sulfur cluster-containing proteins. Seems to help targeting proteins to be folded toward HscA. This is Co-chaperone protein HscB from Citrobacter koseri (strain ATCC BAA-895 / CDC 4225-83 / SGSC4696).